Reading from the N-terminus, the 701-residue chain is Elongation factor G (701 aa).

In terms of domain architecture, tr-type G spans 6 to 285 (HKVRNIGIMA…AVVAYLPNPL (280 aa)). GTP is bound by residues 15–22 (AHIDAGKT), 79–83 (DNPGH), and 133–136 (NKMD).

The protein belongs to the TRAFAC class translation factor GTPase superfamily. Classic translation factor GTPase family. EF-G/EF-2 subfamily.

It is found in the cytoplasm. Its function is as follows. Catalyzes the GTP-dependent ribosomal translocation step during translation elongation. During this step, the ribosome changes from the pre-translocational (PRE) to the post-translocational (POST) state as the newly formed A-site-bound peptidyl-tRNA and P-site-bound deacylated tRNA move to the P and E sites, respectively. Catalyzes the coordinated movement of the two tRNA molecules, the mRNA and conformational changes in the ribosome. This Micrococcus luteus (Micrococcus lysodeikticus) protein is Elongation factor G (fusA).